A 299-amino-acid polypeptide reads, in one-letter code: Protease HtpX homolog (299 aa).

Transmembrane regions (helical) follow at residues 15–35 and 39–59; these read ILLL…GYLF and GLGG…SMIF. Residue histidine 143 coordinates Zn(2+). Residue glutamate 144 is part of the active site. Histidine 147 provides a ligand contact to Zn(2+). Transmembrane regions (helical) follow at residues 158–178 and 198–218; these read IAVA…RMMW and IIML…ATLV. Zn(2+) is bound at residue glutamate 227.

This sequence belongs to the peptidase M48B family. Requires Zn(2+) as cofactor.

The protein resides in the cell membrane. The protein is Protease HtpX homolog of Streptococcus pneumoniae (strain P1031).